Consider the following 203-residue polypeptide: MEQIITEFISRFGYAAIFILILLENVLPIVPSEIILTFAGLMSVKSHLSILTLFIIATIASFIGLLILYYICRLISEERLYRFIDRHGKWIKLKSKDLKRANDWFKKYGVWAVFICRFIPVLRVLITIPAGVNRMNVVTFTVISLIGTTIWNFGLILLGRTLSDSFGMLMTGLHTYSRIMYVVIIIAVIYFAIRYIGKRKRVK.

5 consecutive transmembrane segments (helical) span residues 16–36, 48–68, 108–128, 137–157, and 173–193; these read AIFI…EIIL, LSIL…LLIL, YGVW…LITI, VVTF…GLIL, and LHTY…YFAI.

It belongs to the DedA family.

Its subcellular location is the cell membrane. Functionally, flippase that catalyzes the transport of undecaprenyl phosphate (UndP) across the cytoplasmic membrane, from the external side to the cytoplasmic side. Is involved in UndP recycling during peptidoglycan synthesis. This Staphylococcus aureus (strain NCTC 8325 / PS 47) protein is Undecaprenyl phosphate transporter A.